A 220-amino-acid polypeptide reads, in one-letter code: Iron-sulfur cluster repair protein YtfE (220 aa).

Belongs to the RIC family. YtfE subfamily. In terms of assembly, homodimer.

It is found in the cytoplasm. Its function is as follows. Di-iron-containing protein involved in the repair of iron-sulfur clusters damaged by oxidative and nitrosative stress conditions. The polypeptide is Iron-sulfur cluster repair protein YtfE (Shigella boydii serotype 18 (strain CDC 3083-94 / BS512)).